The sequence spans 347 residues: Globoside alpha-1,3-N-acetylgalactosaminyltransferase 1 (347 aa).

The Cytoplasmic portion of the chain corresponds to 1–6 (MTRPRL). The helical; Signal-anchor for type II membrane protein transmembrane segment at 7 to 27 (AQGLAFFLLGGTGLWVLWKFI) threads the bilayer. Over 28–347 (KDWLLVSYIP…VKKNANWLRT (320 aa)) the chain is Lumenal. Residue Asn108 is glycosylated (N-linked (GlcNAc...) asparagine). Residues 116 to 121 (FAVGKY), 206 to 208 (DVD), and 228 to 231 (HPGY) contribute to the substrate site. The Mn(2+) site is built by Asp206 and Asp208. Glu298 (nucleophile) is an active-site residue.

Belongs to the glycosyltransferase 6 family. Mn(2+) is required as a cofactor.

It is found in the golgi apparatus membrane. It carries out the reaction a globoside Gb4Cer (d18:1(4E)) + UDP-N-acetyl-alpha-D-galactosamine = a globoside Forssman (d18:1(4E)) + UDP + H(+). It catalyses the reaction a globoside Gb4Cer + UDP-N-acetyl-alpha-D-galactosamine = a globoside IV3GalNAc-Gb4Cer + UDP + H(+). The protein operates within protein modification; protein glycosylation. Functionally, catalyzes the formation of Forssman glycolipid via the addition of N-acetylgalactosamine (GalNAc) in alpha-1,3-linkage to GalNAcb-1,3Gala-1,4Galb-1,4GlcCer (Gb4Cer). Forssman glycolipid (also called Forssman antigen; FG) probably serves for adherence of some pathogens. Conversely, it diminishes Shiga toxins susceptibility. This Mus musculus (Mouse) protein is Globoside alpha-1,3-N-acetylgalactosaminyltransferase 1.